Reading from the N-terminus, the 114-residue chain is Iron-sulfur cluster insertion protein ErpA (114 aa).

Iron-sulfur cluster contacts are provided by C42, C106, and C108.

It belongs to the HesB/IscA family. As to quaternary structure, homodimer. Requires iron-sulfur cluster as cofactor.

Functionally, required for insertion of 4Fe-4S clusters for at least IspG. This chain is Iron-sulfur cluster insertion protein ErpA, found in Haemophilus influenzae (strain PittEE).